A 297-amino-acid polypeptide reads, in one-letter code: Probable endonuclease 4 (297 aa).

9 residues coordinate Zn(2+): H69, H110, E145, D179, H182, H214, D227, H229, and E259.

Belongs to the AP endonuclease 2 family. It depends on Zn(2+) as a cofactor.

The enzyme catalyses Endonucleolytic cleavage to 5'-phosphooligonucleotide end-products.. In terms of biological role, endonuclease IV plays a role in DNA repair. It cleaves phosphodiester bonds at apurinic or apyrimidinic (AP) sites, generating a 3'-hydroxyl group and a 5'-terminal sugar phosphate. This is Probable endonuclease 4 from Bacillus velezensis (strain DSM 23117 / BGSC 10A6 / LMG 26770 / FZB42) (Bacillus amyloliquefaciens subsp. plantarum).